A 527-amino-acid chain; its full sequence is Dual specificity protein kinase shkA (527 aa).

Residues 45–304 (ITTESILGDG…GIVSELEEII (260 aa)) enclose the Protein kinase domain. ATP is bound by residues 51–59 (LGDGSFGTV) and Lys72. Asp167 serves as the catalytic Proton acceptor. The 90-residue stretch at 424–513 (WFHGDISTSE…INTPCLGSRF (90 aa)) folds into the SH2 domain.

This sequence belongs to the protein kinase superfamily. TKL Ser/Thr protein kinase family. SH2 domain-containing protein kinase subfamily.

The protein resides in the membrane. It catalyses the reaction L-seryl-[protein] + ATP = O-phospho-L-seryl-[protein] + ADP + H(+). The catalysed reaction is L-threonyl-[protein] + ATP = O-phospho-L-threonyl-[protein] + ADP + H(+). Required for proper chemotaxis and phagocytosis; proper spatiotemporal control of F-actin levels in chemotaxing cells. Negative regulator of the PI3K (phosphatidylinositol 3 kinase) pathway. Predominantly phosphorylates serines and threonines and tyrosines at a lower level. The protein is Dual specificity protein kinase shkA (shkA) of Dictyostelium discoideum (Social amoeba).